The sequence spans 551 residues: Inosine-5'-monophosphate dehydrogenase (551 aa).

CBS domains lie at 102–163 (FILD…PLSE) and 165–221 (MTSD…PLAS). Residues 258–260 (DSS) and 308–310 (GMG) contribute to the NAD(+) site. K(+)-binding residues include Gly-310 and Gly-312. Ser-313 serves as a coordination point for IMP. Residue Cys-315 participates in K(+) binding. Catalysis depends on Cys-315, which acts as the Thioimidate intermediate. Residues 349 to 351 (DGG), 372 to 373 (GS), and 396 to 400 (YRGMG) contribute to the IMP site. Positions 407 to 462 (AGTRRTASPPARGLRSPEASPSTAASSGGASRASALSEASPSAKSEASRTSTSTGS) are disordered. Low complexity predominate over residues 422–462 (SPEASPSTAASSGGASRASALSEASPSAKSEASRTSTSTGS). The active-site Proton acceptor is the Arg-465. Position 477 (Gln-477) interacts with IMP. Glu-536 and Gly-537 together coordinate K(+).

It belongs to the IMPDH/GMPR family. In terms of assembly, homotetramer. Requires K(+) as cofactor.

Its subcellular location is the cytoplasm. It catalyses the reaction IMP + NAD(+) + H2O = XMP + NADH + H(+). It participates in purine metabolism; XMP biosynthesis via de novo pathway; XMP from IMP: step 1/1. Mycophenolic acid (MPA) is a non-competitive inhibitor that prevents formation of the closed enzyme conformation by binding to the same site as the amobile flap. In contrast, mizoribine monophosphate (MZP) is a competitive inhibitor that induces the closed conformation. MPA is a potent inhibitor of mammalian IMPDHs but a poor inhibitor of the bacterial enzymes. MZP is a more potent inhibitor of bacterial IMPDH. Potently inhibited by MPA and adenine dinucleotide analogs such as thiazole-4-carboxamide adenine dinucleotide (TAD). Functionally, catalyzes the conversion of inosine 5'-phosphate (IMP) to xanthosine 5'-phosphate (XMP), the first committed and rate-limiting step in the de novo synthesis of guanine nucleotides, and therefore plays an important role in the regulation of cell growth. This is Inosine-5'-monophosphate dehydrogenase from Toxoplasma gondii.